A 142-amino-acid chain; its full sequence is AP-2 complex subunit sigma (142 aa).

This sequence belongs to the adaptor complexes small subunit family. Adaptor protein complex 2 (AP-2) is a heterotetramer composed of two large adaptins (alpha-type and beta-type subunits), a medium adaptin (mu-type subunit) and a small adaptin (sigma-type subunit).

It localises to the cell membrane. It is found in the membrane. The protein localises to the coated pit. In terms of biological role, subunit of the adaptor protein complex 2 (AP-2). Adaptor protein complexes function in protein transport via transport vesicles in different membrane traffic pathways. Adaptor protein complexes are vesicle coat components and appear to be involved in cargo selection and vesicle formation. AP-2 is involved in clathrin-dependent endocytosis in which cargo proteins are incorporated into vesicles surrounded by clathrin (clathrin-coated vesicles, CCVs) which are destined for fusion with the early endosome. The complex binds polyphosphoinositides. This Arabidopsis thaliana (Mouse-ear cress) protein is AP-2 complex subunit sigma (AP17).